The sequence spans 778 residues: Endonuclease MutS2 (778 aa).

328–335 (GPNTGGKT) provides a ligand contact to ATP. The 76-residue stretch at 702–777 (LDLRGKRYEE…GSGATIVTFK (76 aa)) folds into the Smr domain.

The protein belongs to the DNA mismatch repair MutS family. MutS2 subfamily. In terms of assembly, homodimer. Binds to stalled ribosomes, contacting rRNA.

Functionally, endonuclease that is involved in the suppression of homologous recombination and thus may have a key role in the control of bacterial genetic diversity. Acts as a ribosome collision sensor, splitting the ribosome into its 2 subunits. Detects stalled/collided 70S ribosomes which it binds and splits by an ATP-hydrolysis driven conformational change. Acts upstream of the ribosome quality control system (RQC), a ribosome-associated complex that mediates the extraction of incompletely synthesized nascent chains from stalled ribosomes and their subsequent degradation. Probably generates substrates for RQC. The polypeptide is Endonuclease MutS2 (Streptococcus pneumoniae (strain ATCC 700669 / Spain 23F-1)).